Reading from the N-terminus, the 414-residue chain is MRRAAAAAVTVTTTTRMAAEGMSTAAAAAEATATAAPAAGSRWGRAWPSALRWIPTSTDRIIAAEKRLLSIVKTGYVQEQVNIGSSPPGSKVRWFRSSSDEPRFINTVTFDSEENAPTLVMVHGYGASQGFFFRNFDALASRFRVIAIDQLGWGGSSRPDFTCKSTEETEAWFIDSFEEWRKAKNLSNFILLGHSFGGYVAAKYALQHPEHVQHLILVGPAGFSSETEHSSEWLTKFRATWKGMLVNHLWESNFTPQRIVRGLGPWGPGLVQRYTSARFGSHSTGELLTEQESTLLTDYIYHTLAAKASGELCLKHIFSFGAFVRKPLLQSASDWKVPTTFIYGQQDWMNYQGAQQARKEMKVPCEIIRVPQGGHFVFIDNPSGFHSAVFHACRKFLSGDGEEGLSLPEGLTSA.

One can recognise an AB hydrolase-1 domain in the interval 117–382 (PTLVMVHGYG…GGHFVFIDNP (266 aa)). The short motif at 193-197 (GHSFG) is the GXSXG element. An HXXXXD motif motif is present at residues 375–380 (HFVFID).

It belongs to the peptidase S33 family. ABHD4/ABHD5 subfamily.

The protein localises to the cytoplasm. It catalyses the reaction a 1-acyl-sn-glycero-3-phosphate + an acyl-CoA = a 1,2-diacyl-sn-glycero-3-phosphate + CoA. Functionally, lysophosphatidic acid acyltransferase which functions in phosphatidic acid biosynthesis. May regulate neutral lipid accumulation and participate in the regulation of lipid turnover in vegetative cells. May possess additional triacylglycerol lipase and phospholipase A2 activities in vitro. The polypeptide is Probable 1-acylglycerol-3-phosphate O-acyltransferase (Oryza sativa subsp. japonica (Rice)).